The primary structure comprises 393 residues: MRSTTLLALLALVLLYLVSGALVFRALEQPHEQQAQRELGEVREKFLRAHPCVSDQELGLLIKEVADALGGGADPETNSTSNSSHSAWDLGSAFFFSGTIITTIGYGNVALRTDAGRLFCIFYALVGIPLFGILLAGVGDRLGSSLRHGIGHIEAIFLKWHVPPELVRVLSAMLFLLIGCLLFVLTPTFVFCYMEDWSKLEAIYFVIVTLTTVGFGDYVAGADPRQDSPAYQPLVWFWILLGLAYFASVLTTIGNWLRVVSRRTRAEMGGLTAQAASWTGTVTARVTQRAGPAAPPPEKEQPLLPPPPCPAQPLGRPRSPSPPEKAQPPSPPTASALDYPSENLAFIDESSDTQSERGCPLPRAPRGRRRPNPPRKPVRPRGPGRPRDKGVPV.

Over 1–3 (MRS) the chain is Cytoplasmic. A helical membrane pass occupies residues 4-24 (TTLLALLALVLLYLVSGALVF). The Extracellular segment spans residues 25-87 (RALEQPHEQQ…NSTSNSSHSA (63 aa)). Residues Asn78 and Asn82 are each glycosylated (N-linked (GlcNAc...) asparagine). The helical intramembrane region spans 88 to 102 (WDLGSAFFFSGTIIT). 4 residues coordinate K(+): Thr103, Ile104, Gly105, and Tyr106. A selectivity filter 1 region spans residues 103–108 (TIGYGN). An intramembrane segment occupies 103 to 109 (TIGYGNV). At 110–117 (ALRTDAGR) the chain is on the extracellular side. A helical transmembrane segment spans residues 118–150 (LFCIFYALVGIPLFGILLAGVGDRLGSSLRHGI). Residues 151 to 172 (GHIEAIFLKWHVPPELVRVLSA) lie on the Cytoplasmic side of the membrane. Residues 173-194 (MLFLLIGCLLFVLTPTFVFCYM) traverse the membrane as a helical segment. Residues 195-199 (EDWSK) lie on the Extracellular side of the membrane. The helical intramembrane region spans 200 to 213 (LEAIYFVIVTLTTV). K(+)-binding residues include Thr212, Val213, Gly214, and Phe215. The interval 212 to 217 (TVGFGD) is selectivity filter 2. The stretch at 214–219 (GFGDYV) is an intramembrane region. The Extracellular portion of the chain corresponds to 220-233 (AGADPRQDSPAYQP). The chain crosses the membrane as a helical span at residues 234–260 (LVWFWILLGLAYFASVLTTIGNWLRVV). Over 261–393 (SRRTRAEMGG…GRPRDKGVPV (133 aa)) the chain is Cytoplasmic. The interval 285 to 393 (RVTQRAGPAA…GRPRDKGVPV (109 aa)) is disordered. A compositionally biased stretch (pro residues) spans 319 to 332 (SPSPPEKAQPPSPP). Positions 365 to 384 (PRGRRRPNPPRKPVRPRGPG) are enriched in basic residues.

It belongs to the two pore domain potassium channel (TC 1.A.1.8) family. In terms of assembly, homodimer; disulfide-linked. Forms heterodimers with other 2-pore domain K(+) channel subunits, such as KCNK2 and KCNK10. N-glycosylated.

The protein localises to the cell membrane. The protein resides in the cell projection. It localises to the axon. The enzyme catalyses K(+)(in) = K(+)(out). It catalyses the reaction Rb(+)(in) = Rb(+)(out). The catalysed reaction is Cs(+)(in) = Cs(+)(out). Its activity is regulated as follows. Activated by mechanical stretch and arachidonic acid. Its function is as follows. K(+) channel that conducts voltage-dependent outward rectifying currents upon membrane depolarization. Voltage sensing is coupled to K(+) electrochemical gradient in an 'ion flux gating' mode where outward but not inward ion flow opens the gate. Converts to voltage-independent 'leak' conductance mode upon stimulation by various stimuli including mechanical membrane stretch, basic pH, heat and lipids. Homo- and heterodimerizes to form functional channels with distinct regulatory and gating properties. At trigeminal A-beta afferent nerves, the heterodimer of KCNK2/TREK-1 and KCNK4/TRAAK is mostly coexpressed at nodes of Ranvier where it conducts voltage-independent mechanosensitive and thermosensitive currents, allowing rapid action potential repolarization, high speed and high frequence saltatory conduction on myelinated nerves to ensure prompt sensory responses. Permeable to other monovalent cations such as Rb(+) and Cs(+). The chain is Potassium channel subfamily K member 4 from Homo sapiens (Human).